The sequence spans 248 residues: Triosephosphate isomerase (248 aa).

2 residues coordinate substrate: asparagine 10 and lysine 12. The Electrophile role is filled by histidine 95. Residue glutamate 165 is the Proton acceptor of the active site.

Belongs to the triosephosphate isomerase family. As to quaternary structure, homodimer.

The protein localises to the cytoplasm. The catalysed reaction is D-glyceraldehyde 3-phosphate = dihydroxyacetone phosphate. The protein operates within carbohydrate biosynthesis; gluconeogenesis. It participates in carbohydrate degradation; glycolysis; D-glyceraldehyde 3-phosphate from glycerone phosphate: step 1/1. This Candida albicans (strain SC5314 / ATCC MYA-2876) (Yeast) protein is Triosephosphate isomerase (TPI1).